The chain runs to 209 residues: Thymidine kinase (209 aa).

ATP contacts are provided by residues 9–16 and 88–91; these read AAMNAGKS and DEAQ. Glu89 functions as the Proton acceptor in the catalytic mechanism. Zn(2+)-binding residues include Cys146, Cys148, Cys183, and His186.

This sequence belongs to the thymidine kinase family. As to quaternary structure, homotetramer.

Its subcellular location is the cytoplasm. The enzyme catalyses thymidine + ATP = dTMP + ADP + H(+). The chain is Thymidine kinase from Legionella pneumophila subsp. pneumophila (strain Philadelphia 1 / ATCC 33152 / DSM 7513).